The sequence spans 509 residues: Photosystem II CP47 reaction center protein (509 aa).

6 consecutive transmembrane segments (helical) span residues 21–36 (SVHL…WAGS), 101–115 (IVLS…IWHW), 140–156 (GIHL…FGAF), 203–218 (IAAG…FHLN), 237–252 (VLSS…SFVV), and 457–472 (NFAL…HGSR).

The protein belongs to the PsbB/PsbC family. PsbB subfamily. In terms of assembly, PSII is composed of 1 copy each of membrane proteins PsbA, PsbB, PsbC, PsbD, PsbE, PsbF, PsbH, PsbI, PsbJ, PsbK, PsbL, PsbM, PsbT, PsbY, PsbZ, Psb30/Ycf12, at least 3 peripheral proteins of the oxygen-evolving complex and a large number of cofactors. It forms dimeric complexes. It depends on Binds multiple chlorophylls. PSII binds additional chlorophylls, carotenoids and specific lipids. as a cofactor.

The protein resides in the plastid. It localises to the chloroplast thylakoid membrane. One of the components of the core complex of photosystem II (PSII). It binds chlorophyll and helps catalyze the primary light-induced photochemical processes of PSII. PSII is a light-driven water:plastoquinone oxidoreductase, using light energy to abstract electrons from H(2)O, generating O(2) and a proton gradient subsequently used for ATP formation. This is Photosystem II CP47 reaction center protein from Cyanidium caldarium (Red alga).